The following is a 214-amino-acid chain: UPF0502 protein Pput_3252 (214 aa).

The protein belongs to the UPF0502 family.

The sequence is that of UPF0502 protein Pput_3252 from Pseudomonas putida (strain ATCC 700007 / DSM 6899 / JCM 31910 / BCRC 17059 / LMG 24140 / F1).